Consider the following 197-residue polypeptide: Sec-independent protein translocase protein TatB (197 aa).

Residues 1 to 21 traverse the membrane as a helical segment; that stretch reads MFDIGFGELLLVMVLGLIVLG. Positions 93–197 are disordered; that stretch reads KRGYTETPSP…ASARQPSDSR (105 aa). Basic and acidic residues-rich tracts occupy residues 104–113 and 160–169; these read KSDDPKKSGD and NHNDGRHATS. The segment covering 180-197 has biased composition (low complexity); the sequence is PEQSQPSAASARQPSDSR.

Belongs to the TatB family. The Tat system comprises two distinct complexes: a TatABC complex, containing multiple copies of TatA, TatB and TatC subunits, and a separate TatA complex, containing only TatA subunits. Substrates initially bind to the TatABC complex, which probably triggers association of the separate TatA complex to form the active translocon.

Its subcellular location is the cell inner membrane. Functionally, part of the twin-arginine translocation (Tat) system that transports large folded proteins containing a characteristic twin-arginine motif in their signal peptide across membranes. Together with TatC, TatB is part of a receptor directly interacting with Tat signal peptides. TatB may form an oligomeric binding site that transiently accommodates folded Tat precursor proteins before their translocation. The chain is Sec-independent protein translocase protein TatB from Pectobacterium atrosepticum (strain SCRI 1043 / ATCC BAA-672) (Erwinia carotovora subsp. atroseptica).